A 251-amino-acid polypeptide reads, in one-letter code: Prothoracicostatic peptides (251 aa).

A disordered region spans residues 1–22; it reads MRKSARGQVCTEAGAGASGDWQ. A propeptide spanning residues 1-77 is cleaved from the precursor; sequence MRKSARGQVC…GWQDLNSAWG (77 aa). A Tryptophan amide modification is found at Trp89. A propeptide spanning residues 93–138 is cleaved from the precursor; it reads GWNDMSSAWGKRGWNDMSSAWGKRGWNDMSSAWGKRGWNDMSSAWG. Tryptophan amide is present on Trp152. Positions 156 to 187 are excised as a propeptide; it reads AAEPDYEEIDAAIEQLIPIQQLSDNERMEVPE. Tryptophan amide is present on residues Trp198 and Trp228. The segment at 227–251 is disordered; sequence MWGKRSAPDADAVDDDHESSARDEA.

Prothoracicostatic peptide 5: Expressed in antennal lobe (AL), corpora cardiaca (CC), corpora allata (CA) and gnathal ganglion (GNG) (at protein level). Expression in AL detected in all animals, in CC, CA and GNG in most (at protein level). Prothoracicostatic peptide 6: Expressed in antennal lobe (AL), corpora cardiaca (CC), corpora allata (CA) and gnathal ganglion (GNG) (at protein level). Expression in AL detected in all animals, expression in GNG in most animals, in CA and CC detected in some animals (at protein level). Prothoracicostatic peptide 7: Expressed in antennal lobe (AL), corpora cardiaca (CC), corpora allata (CA) and gnathal ganglion (GNG) (at protein level). Expression in AL, CA and CC detected in most animals, expression in GNG in some animals (at protein level). Prothoracicostatic peptide precursor-related peptide 2: Expressed in antennal lobe (AL), corpora cardiaca (CC) and corpora allata (CA) with expression detected in few animals (at protein level). Not expressed in gnathal ganglion (GNG) (at protein level). Prothoracicostatic peptide 8: Expressed in antennal lobe (AL), corpora cardiaca (CC), corpora allata (CA) and gnathal ganglion (GNG) (at protein level). Expression in AL detected in all animals, expression in GNG in most animals, in CA and CC detected in some animals (at protein level). Prothoracicostatic peptide precursor-related peptide 3: Expressed in antennal lobe (AL) in few animals (at protein level). Not expressed in corpora cardiaca (CC), corpora allata (CA) and gnathal ganglion (GNG) (at protein level).

It localises to the secreted. In Agrotis ipsilon (Black cutworm moth), this protein is Prothoracicostatic peptides.